Consider the following 318-residue polypeptide: Sucrose operon repressor (318 aa).

Residues 1 to 56 enclose the HTH lacI-type domain; the sequence is MIKLEDVANKAGVSVTTVSRVINRKGYLSDATISKVEKAMQDLHYIPNAAARSLQG. The H-T-H motif DNA-binding region spans 4–23; the sequence is LEDVANKAGVSVTTVSRVIN.

This protein may control the expression of the genes that are involved in the transport and catabolism of sucrose. This is Sucrose operon repressor (sacR) from Lactococcus lactis subsp. lactis (Streptococcus lactis).